A 442-amino-acid polypeptide reads, in one-letter code: Thymidine phosphorylase (442 aa).

Belongs to the thymidine/pyrimidine-nucleoside phosphorylase family. Homodimer.

It catalyses the reaction thymidine + phosphate = 2-deoxy-alpha-D-ribose 1-phosphate + thymine. It functions in the pathway pyrimidine metabolism; dTMP biosynthesis via salvage pathway; dTMP from thymine: step 1/2. In terms of biological role, the enzymes which catalyze the reversible phosphorolysis of pyrimidine nucleosides are involved in the degradation of these compounds and in their utilization as carbon and energy sources, or in the rescue of pyrimidine bases for nucleotide synthesis. This Vibrio parahaemolyticus serotype O3:K6 (strain RIMD 2210633) protein is Thymidine phosphorylase.